Reading from the N-terminus, the 287-residue chain is 33 kDa chaperonin (287 aa).

Intrachain disulfides connect Cys-231/Cys-233 and Cys-264/Cys-267.

This sequence belongs to the HSP33 family. Post-translationally, under oxidizing conditions two disulfide bonds are formed involving the reactive cysteines. Under reducing conditions zinc is bound to the reactive cysteines and the protein is inactive.

The protein localises to the cytoplasm. In terms of biological role, redox regulated molecular chaperone. Protects both thermally unfolding and oxidatively damaged proteins from irreversible aggregation. Plays an important role in the bacterial defense system toward oxidative stress. This chain is 33 kDa chaperonin, found in Thermosipho melanesiensis (strain DSM 12029 / CIP 104789 / BI429).